Reading from the N-terminus, the 352-residue chain is MFGNDIFTRVKRSENKKMAEIAQFLHENDLSVDTTVEVFITVTRDEKLIACGGIAGNIIKCVAISESVRGEGLALTLATELINLAYERHSTHLFIYTKTEYEALFRQCGFSTLTSVPGVMVLMENSATRLKRYAESLKKFRHPGNKIGCIVMNANPFTNGHRYLIQQAAAQCDWLHLFLVKEDSSRFPYEDRLDLVLKGTADIPRLTVHRGSEYIISRATFPCYFIKEQSVINHCYTEIDLKIFRQYLAPALGVTHRFVGTEPFCRVTAQYNQDMRYWLETPTISAPPIELVEIERLRYQEMPISASRVRQLLAKNDLTAIAPLVPAVTLHYLQNLLEHSRQDAAARQKTPA.

The 128-residue stretch at 1–128 (MFGNDIFTRV…VMVLMENSAT (128 aa)) folds into the N-acetyltransferase domain.

The enzyme catalyses holo-[citrate lyase ACP] + acetate + ATP = acetyl-[citrate lyase ACP] + AMP + diphosphate. Functionally, acetylation of prosthetic group (2-(5''-phosphoribosyl)-3'-dephosphocoenzyme-A) of the gamma subunit of citrate lyase. The polypeptide is [Citrate [pro-3S]-lyase] ligase (citC) (Escherichia coli (strain K12)).